The chain runs to 429 residues: MKTSILILAAGLGTRMKSQKPKVLQELCQKSMILHILKKAFALSDDVSVVLSHQKERVEKEILEHFPKTQILEQDLQNYPGTAGALRGFEPKNERVLILCGDMPLVEQTSLEALLGNNAKLNLAVFKARDSKSYGRVVIKDDGVEKIVEFKDANAREREINTCNAGVYVIDSRLLKELLPLIDNNNAAKEYYLTDIVKLAKEKDVMIKAVFVDEDEFMGINDKFELSIAENFMQEKIKKYWMQQGVIFHLPQSTFIGVDVKFVGECEVYENVRIGGKSKIINSIIKSSSVIENSIVENSDVGPLAHLRPNCELKNTHIGNFVECKNANLNAVKAGHLSYLGDCEIDSGTNIGCGTITCNYDGVKKYKTIIGKNVFVGSDTQFIAPVKIEDEVIIAAGSTVSVNVEKGALFINRTGHKIIKNYYYKKFQK.

The segment at 1-223 (MKTSILILAA…EDEFMGINDK (223 aa)) is pyrophosphorylase. UDP-N-acetyl-alpha-D-glucosamine-binding positions include 8-11 (LAAG), Lys-22, Gln-74, and 81-82 (GT). Residue Asp-102 coordinates Mg(2+). Residues Gly-135, Glu-149, Asn-164, and Asn-221 each coordinate UDP-N-acetyl-alpha-D-glucosamine. Asn-221 is a binding site for Mg(2+). Residues 224-244 (FELSIAENFMQEKIKKYWMQQ) are linker. The segment at 245 to 429 (GVIFHLPQST…KNYYYKKFQK (185 aa)) is N-acetyltransferase. 2 residues coordinate UDP-N-acetyl-alpha-D-glucosamine: Arg-308 and Lys-325. His-336 functions as the Proton acceptor in the catalytic mechanism. The UDP-N-acetyl-alpha-D-glucosamine site is built by Tyr-339 and Asn-350. Acetyl-CoA is bound by residues 359 to 360 (NY), Ser-378, Ala-396, and Arg-413.

This sequence in the N-terminal section; belongs to the N-acetylglucosamine-1-phosphate uridyltransferase family. In the C-terminal section; belongs to the transferase hexapeptide repeat family. Homotrimer. The cofactor is Mg(2+).

It localises to the cytoplasm. It catalyses the reaction alpha-D-glucosamine 1-phosphate + acetyl-CoA = N-acetyl-alpha-D-glucosamine 1-phosphate + CoA + H(+). The enzyme catalyses N-acetyl-alpha-D-glucosamine 1-phosphate + UTP + H(+) = UDP-N-acetyl-alpha-D-glucosamine + diphosphate. The protein operates within nucleotide-sugar biosynthesis; UDP-N-acetyl-alpha-D-glucosamine biosynthesis; N-acetyl-alpha-D-glucosamine 1-phosphate from alpha-D-glucosamine 6-phosphate (route II): step 2/2. Its pathway is nucleotide-sugar biosynthesis; UDP-N-acetyl-alpha-D-glucosamine biosynthesis; UDP-N-acetyl-alpha-D-glucosamine from N-acetyl-alpha-D-glucosamine 1-phosphate: step 1/1. It functions in the pathway bacterial outer membrane biogenesis; LPS lipid A biosynthesis. Functionally, catalyzes the last two sequential reactions in the de novo biosynthetic pathway for UDP-N-acetylglucosamine (UDP-GlcNAc). The C-terminal domain catalyzes the transfer of acetyl group from acetyl coenzyme A to glucosamine-1-phosphate (GlcN-1-P) to produce N-acetylglucosamine-1-phosphate (GlcNAc-1-P), which is converted into UDP-GlcNAc by the transfer of uridine 5-monophosphate (from uridine 5-triphosphate), a reaction catalyzed by the N-terminal domain. This chain is Bifunctional protein GlmU, found in Campylobacter jejuni subsp. doylei (strain ATCC BAA-1458 / RM4099 / 269.97).